The following is a 1292-amino-acid chain: MSRRKQAKPRSVKVEEGEASDFSLAWDSSVAAAGGLEGEPECDRKTSRALEDRNSVTSQEERNEDDEDVEDESIYTCDHCQQDFESLADLTDHRAHRCPGDGDDDPQLSWVASSPSSKDVASPTQMIGDGCDLGLGEEEGGTGLPYPCQFCDKSFIRLSYLKRHEQIHSDKLPFKCTFCSRLFKHKRSRDRHIKLHTGDKKYHCHECEAAFSRSDHLKIHLKTHSSSKPFKCSVCKRGFSSTSSLQSHMQAHKKNKEHLAKSEKEAKKDDFMCDYCEDTFSQTEELEKHVLTLHPQLSEKADLQCIHCPEVFVDESTLLAHIHQAHANQKHKCPMCPEQFSSVEGVYCHLDSHRQPDSSNHSVSPDPVLGSVASMSSATPDSSASVERGSTPDSTLKPLRGQKKMRDDGQSWPKVVYSCPYCSKRDFTSLAVLEIHLKTIHADKPQQSHTCQICLDSMPTLYNLNEHVRKLHKSHAYPVMQFGNISAFHCNYCPEMFADINSLQEHIRVSHCGPNANPPDGNNAFFCNQCSMGFLTESSLTEHIQQAHCSVGSTKLESPVVQPTQSFMEVYSCPYCTNSPIFGSILKLTKHIKENHKNIPLAHSKKSKAEQSPVSSDVEVSSPKRQRLSGSANSISNGEYPCNQCDLKFSNFESFQTHLKLHLELLLRKQACPQCKEDFDSQESLLQHLTVHYMTTSTHYVCESCDKQFSSVDDLQKHLLDMHTFVLYHCTLCQEVFDSKVSIQVHLAVKHSNEKKMYRCTACNWDFRKEADLQVHVKHSHLGNPAKAHKCIFCGETFSTEVELQCHITTHSKKYNCRFCSKAFHAVILLEKHLREKHCVFDAAAENGTANGVPPTSTKKAEPADLQGMLLKNPEAPNSHEASEDDVDASEPMYGCDICGAAYTMEVLLQNHRLRDHNIRPGEDDGSRKKAEFIKGSHKCNVCSRTFFSENGLREHLQTHRGPAKHYMCPICGERFPSLLTLTEHKVTHSKSLDTGTCRICKMPLQSEEEFIEHCQMHPDLRNSLTGFRCVVCMQTVTSTLELKIHGTFHMQKLAGSSAASSPNGQGLQKLYKCALCLKEFRSKQDLVRLDVNGLPYGLCAGCMARSANGQVGGLAPPEPADRPCAGLRCPECNVKFESAEDLESHMQVDHRDLTPETSGPRKGAQTSPVPRKKTYQCIKCQMTFENEREIQIHVANHMIEEGINHECKLCNQMFDSPAKLLCHLIEHSFEGMGGTFKCPVCFTVFVQANKLQQHIFAVHGQEDKIYDCSQCPQKFFFQTELQNHTMSQHAQ.

Residues 1-11 (MSRRKQAKPRS) are compositionally biased toward basic residues. 3 disordered regions span residues 1–21 (MSRR…EASD), 33–70 (AGGL…EDVE), and 95–125 (AHRC…SPTQ). The span at 41–54 (ECDRKTSRALEDRN) shows a compositional bias: basic and acidic residues. Phosphoserine occurs at positions 55 and 58. The segment at 75-101 (YTCDHCQQDFESLADLTDHRAHRCPGD) adopts a C2H2-type 1; degenerate zinc-finger fold. Residues 110–125 (WVASSPSSKDVASPTQ) are compositionally biased toward polar residues. C2H2-type zinc fingers lie at residues 146 to 168 (YPCQ…EQIH), 174 to 196 (FKCT…IKLH), 202 to 224 (YHCH…LKTH), 230 to 252 (FKCS…MQAH), 271 to 294 (FMCD…LTLH), 303 to 326 (LQCI…HQAH), and 331 to 353 (HKCP…LDSH). Residues 354 to 407 (RQPDSSNHSVSPDPVLGSVASMSSATPDSSASVERGSTPDSTLKPLRGQKKMRD) are disordered. Residues 371–385 (SVASMSSATPDSSAS) are compositionally biased toward low complexity. The C2H2-type 9; degenerate zinc finger occupies 417 to 441 (YSCPYCSKRDFTSLAVLEIHLKTIH). C2H2-type zinc fingers lie at residues 449 to 472 (HTCQ…RKLH), 488 to 511 (FHCN…RVSH), and 525 to 548 (FFCN…QQAH). The C2H2-type 13; atypical zinc finger occupies 571–596 (YSCPYCTNSPIFGSILKLTKHIKENH). The segment at 598-635 (NIPLAHSKKSKAEQSPVSSDVEVSSPKRQRLSGSANSI) is disordered. Position 612 is a phosphoserine (serine 612). Residues 612–623 (SPVSSDVEVSSP) are compositionally biased toward low complexity. C2H2-type zinc fingers lie at residues 640 to 662 (YPCN…LKLH), 670 to 692 (QACP…LTVH), 700 to 723 (YVCE…LDMH), 728 to 751 (YHCT…AVKH), 758 to 781 (YRCT…KHSH), 789 to 811 (HKCI…ITTH), and 815 to 838 (YNCR…REKH). The segment at 894-916 (YGCDICGAAYTMEVLLQNHRLRD) adopts a C2H2-type 21; degenerate zinc-finger fold. 3 C2H2-type zinc fingers span residues 938–960 (HKCN…LQTH), 967–989 (YMCP…KVTH), and 1028–1050 (FRCV…GTFH). Phosphoserine is present on serine 1062. The segment at 1072 to 1090 (YKCALCLKEFRSKQDLVRL) adopts a C2H2-type 25; degenerate zinc-finger fold. 5 consecutive C2H2-type zinc fingers follow at residues 1128 to 1151 (LRCP…QVDH), 1176 to 1198 (YQCI…VANH), 1206 to 1228 (HECK…LIEH), 1237 to 1260 (FKCP…FAVH), and 1267 to 1290 (YDCS…MSQH). Positions 1144–1155 (ESHMQVDHRDLT) are enriched in basic and acidic residues. The interval 1144–1171 (ESHMQVDHRDLTPETSGPRKGAQTSPVP) is disordered.

It belongs to the krueppel C2H2-type zinc-finger protein family. Homodimer. Interacts with SMAD1 and SMAD4. Interacts with EBF1. Interacts with PARP1. Interacts with CEP290. In terms of tissue distribution, within the cerebellum, Zfp423 is expressed in both ventricular and external germinal zones. Transiently expressed in newly differentiating olfactory-receptor neurons.

The protein localises to the nucleus. Functionally, transcription factor that can both act as an activator or a repressor depending on the context. Plays a central role in BMP signaling and olfactory neurogenesis. Associates with SMADs in response to BMP2 leading to activate transcription of BMP target genes. Acts as a transcriptional repressor via its interaction with EBF1, a transcription factor involved in terminal olfactory receptor neurons differentiation; this interaction preventing EBF1 to bind DNA and activate olfactory-specific genes. Involved in olfactory neurogenesis by participating in a developmental switch that regulates the transition from differentiation to maturation in olfactory receptor neurons. Controls proliferation and differentiation of neural precursors in cerebellar vermis formation. This is Zinc finger protein 423 (Znf423) from Mus musculus (Mouse).